We begin with the raw amino-acid sequence, 137 residues long: Methylglyoxal synthase (137 aa).

An MGS-like domain is found at 1–137 (MKIALIAHDR…NIVHGRDRDA (137 aa)). Substrate is bound by residues His-8, Lys-12, 34-37 (TGTT), and 54-55 (SG). Asp-60 (proton donor/acceptor) is an active-site residue. His-87 contacts substrate.

This sequence belongs to the methylglyoxal synthase family.

The catalysed reaction is dihydroxyacetone phosphate = methylglyoxal + phosphate. Catalyzes the formation of methylglyoxal from dihydroxyacetone phosphate. This chain is Methylglyoxal synthase, found in Bacillus licheniformis (strain ATCC 14580 / DSM 13 / JCM 2505 / CCUG 7422 / NBRC 12200 / NCIMB 9375 / NCTC 10341 / NRRL NRS-1264 / Gibson 46).